A 316-amino-acid polypeptide reads, in one-letter code: MNPNFLDFEQPIADLQAKIEELRLVGNDNALNISDEISRLQDKSKALTENIFGNLSSWQIAQLARHPKRPYTLDYIGYLFSDFEELHGDRHFADDPAIVGGVARLDGSPVMVIGHQKGREVREKVRRNFGMPRPEGYRKACRLMEMAERFKMPILTFIDTPGAYPGIDAEERGQSEAIAWNLRVMARLKTPIIATVIGEGGSGGALAIGVCDQLNMLQYSTYSVISPEGCASILWKTAEKAPEAAEAMGITAERLKGLGIVDKVIDEPLGGAHRDPASMAESIRGELLAQLKMLQGLEMGELLERRYDRLMSYGAP.

The region spanning 39–293 is the CoA carboxyltransferase C-terminal domain; that stretch reads RLQDKSKALT…RGELLAQLKM (255 aa).

Belongs to the AccA family. In terms of assembly, acetyl-CoA carboxylase is a heterohexamer composed of biotin carboxyl carrier protein (AccB), biotin carboxylase (AccC) and two subunits each of ACCase subunit alpha (AccA) and ACCase subunit beta (AccD).

The protein resides in the cytoplasm. It catalyses the reaction N(6)-carboxybiotinyl-L-lysyl-[protein] + acetyl-CoA = N(6)-biotinyl-L-lysyl-[protein] + malonyl-CoA. It functions in the pathway lipid metabolism; malonyl-CoA biosynthesis; malonyl-CoA from acetyl-CoA: step 1/1. Component of the acetyl coenzyme A carboxylase (ACC) complex. First, biotin carboxylase catalyzes the carboxylation of biotin on its carrier protein (BCCP) and then the CO(2) group is transferred by the carboxyltransferase to acetyl-CoA to form malonyl-CoA. This chain is Acetyl-coenzyme A carboxylase carboxyl transferase subunit alpha, found in Pseudomonas aeruginosa (strain UCBPP-PA14).